The primary structure comprises 336 residues: NADH-cytochrome b5 reductase 2 (336 aa).

The helical transmembrane segment at 28–50 (GGSSNGALYVGIGAAGLAGAYIY) threads the bilayer. In terms of domain architecture, FAD-binding FR-type spans 84–189 (QGFISLLLDK…KGPIPKYPWS (106 aa)). 192–227 (KHEHIALIAGGTGITPMWQTARAIFKNPEDKTKVTL) contacts FAD.

Belongs to the flavoprotein pyridine nucleotide cytochrome reductase family. It depends on FAD as a cofactor.

The protein resides in the mitochondrion outer membrane. It carries out the reaction 2 Fe(III)-[cytochrome b5] + NADH = 2 Fe(II)-[cytochrome b5] + NAD(+) + H(+). Its function is as follows. May mediate the reduction of outer membrane cytochrome b5. The protein is NADH-cytochrome b5 reductase 2 (MCR1) of Phaeosphaeria nodorum (strain SN15 / ATCC MYA-4574 / FGSC 10173) (Glume blotch fungus).